Consider the following 570-residue polypeptide: Sulfite reductase [NADPH] hemoprotein beta-component (570 aa).

Positions 434, 440, 479, and 483 each coordinate [4Fe-4S] cluster. C483 contributes to the siroheme binding site.

This sequence belongs to the nitrite and sulfite reductase 4Fe-4S domain family. Alpha(8)-beta(8). The alpha component is a flavoprotein, the beta component is a hemoprotein. Siroheme is required as a cofactor. The cofactor is [4Fe-4S] cluster.

The enzyme catalyses hydrogen sulfide + 3 NADP(+) + 3 H2O = sulfite + 3 NADPH + 4 H(+). It participates in sulfur metabolism; hydrogen sulfide biosynthesis; hydrogen sulfide from sulfite (NADPH route): step 1/1. Component of the sulfite reductase complex that catalyzes the 6-electron reduction of sulfite to sulfide. This is one of several activities required for the biosynthesis of L-cysteine from sulfate. The sequence is that of Sulfite reductase [NADPH] hemoprotein beta-component from Shigella boydii serotype 4 (strain Sb227).